The following is a 636-amino-acid chain: MGEKDKLHEISSKFASLGLGSLKSTPKARETTEPPPPSSQQPPSTPNGKEAASPSALKQNVRPSLNSVQQTPASIDAVASSSNVSLQSQQPLSKPVVSSKPNQTTAMPPPSNNPSRHVSSTSNKPAAVSPNPAAHHAELPSGSVPPSASVSRANSTATTTPHKAGVVSNPAAANVHVLSVAASPNPSTPSNGPAPVSTTATPSRNPVTRLQRIFSQNSVSRQNSRTGRGAAVANTEETNSTGGSETGGAANSSSTSNPSSAKWSRFTVYDDASHTHQLRPARRQEKLGKMLKDFLAGNSKKREEERIAKEAADAQHQLSLVQSWINGYGQEKLADKKDPAKVSASFVEKYGRCQEVIGRGAFGVVRIAHKVDPQNSGSETLYAVKEFRRKPAESQKKYTKRLTSEFCISSSLRHPNVIHTLDLIQDGKGDYCEVMELCSGGDLYTLIMAAGRLEPMEADCFFKQLMRGVDYLHDMGVAHRDLKPENLLLTVSGSLKITDFGNGECFRMAWEKEAHMTCGLCGSAPYIAPEEYTESEFDPRAVDVWACGVIYMAMRTGRHLWRVAKKSEDEYYSRYLMDRKNESGYEPIEMLERSRCRNTLYNILHPNPTYRLTAKQIMKSEWVRSITLCEAGNAGL.

Positions 1 to 11 are enriched in basic and acidic residues; sequence MGEKDKLHEIS. 2 disordered regions span residues 1–167 and 181–261; these read MGEK…AGVV and AASP…PSSA. The span at 33–45 shows a compositional bias: pro residues; the sequence is EPPPPSSQQPPST. 2 stretches are compositionally biased toward polar residues: residues 56 to 92 and 113 to 124; these read ALKQNVRPSLNSVQQTPASIDAVASSSNVSLQSQQPL and NPSRHVSSTSNK. Residues 140–155 are compositionally biased toward low complexity; that stretch reads PSGSVPPSASVSRANS. Residues 182–226 are compositionally biased toward polar residues; sequence ASPNPSTPSNGPAPVSTTATPSRNPVTRLQRIFSQNSVSRQNSRT. Ser-218 is subject to Phosphoserine. The span at 234–261 shows a compositional bias: low complexity; sequence NTEETNSTGGSETGGAANSSSTSNPSSA. Phosphothreonine occurs at positions 238 and 241. A Phosphoserine modification is found at Ser-299. The Protein kinase domain maps to 351-623; it reads GRCQEVIGRG…AKQIMKSEWV (273 aa). ATP-binding positions include 357 to 365 and Lys-385; that span reads IGRGAFGVV. Catalysis depends on Asp-481, which acts as the Proton acceptor.

This sequence belongs to the protein kinase superfamily. Ser/Thr protein kinase family. As to quaternary structure, interacts with sty1.

The protein resides in the cytoplasm. The enzyme catalyses L-seryl-[protein] + ATP = O-phospho-L-seryl-[protein] + ADP + H(+). It carries out the reaction L-threonyl-[protein] + ATP = O-phospho-L-threonyl-[protein] + ADP + H(+). Functionally, promotes K(+) uptake, by the potassium transporter trk1-trk2, which leads to the subsequent cellular resistance to toxic cations such as Na(+), Li(+) and Ca(2+). In Schizosaccharomyces pombe (strain 972 / ATCC 24843) (Fission yeast), this protein is Serine/threonine-protein kinase hal4 (hal4).